Reading from the N-terminus, the 388-residue chain is Na(+)/H(+) antiporter NhaA (388 aa).

Residues 1-11 (MKHLHRFFSSD) lie on the Cytoplasmic side of the membrane. The chain crosses the membrane as a helical span at residues 12–31 (ASGGIILIIAAILAMIMANS). At 32-58 (GATSGWYHDFLETPVQLRVGSLEINKN) the chain is on the periplasmic side. The chain crosses the membrane as a helical span at residues 59–80 (MLLWINDALMAVFFLLVGLEVK). The Cytoplasmic segment spans residues 81–96 (RELMQGSLASLRQAAF). A helical membrane pass occupies residues 97 to 116 (PVIAAIGGMIVPALLYLAFN). Topologically, residues 117 to 122 (YADPIT) are periplasmic. Residues 123 to 130 (REGWAIPA) traverse the membrane as a helical segment. At 131–154 (ATDIAFALGVLALLGSRVPLVLKI) the chain is on the cytoplasmic side. The helical transmembrane segment at 155–176 (FLMALAIIDDLGAIIIIALFYT) threads the bilayer. Over 177-180 (NDLS) the chain is Periplasmic. The helical transmembrane segment at 181–200 (MASLGVAAVAIAVLAVLNLC) threads the bilayer. Residues 201 to 204 (GVRR) lie on the Cytoplasmic side of the membrane. The helical transmembrane segment at 205-222 (TGVYILVGVVLWTAVLKS) threads the bilayer. A topological domain (periplasmic) is located at residue Gly-223. The chain crosses the membrane as a helical span at residues 224–236 (VHATLAGVIVGFF). Over 237 to 253 (IPLKEKHGRSPAKRLEH) the chain is Cytoplasmic. The helical transmembrane segment at 254–272 (VLHPWVAYLILPLFAFANA) threads the bilayer. Residues 273 to 286 (GVSLQGVTLDGLTS) are Periplasmic-facing. Residues 287–310 (ILPLGIIAGLLIGKPLGISLFCWL) form a helical membrane-spanning segment. Over 311–339 (ALRLKLAHLPEGTTYQQIMVVGILCGIGF) the chain is Cytoplasmic. Residues 340-350 (TMSIFIASLAF) form a helical membrane-spanning segment. Topologically, residues 351–357 (GSVDPEL) are periplasmic. A helical transmembrane segment spans residues 358-380 (INWAKLGILVGSISSAVIGYSWL). Topologically, residues 381–388 (RVRLRPSV) are cytoplasmic.

It belongs to the NhaA Na(+)/H(+) (TC 2.A.33) antiporter family.

It localises to the cell inner membrane. It carries out the reaction Na(+)(in) + 2 H(+)(out) = Na(+)(out) + 2 H(+)(in). Its function is as follows. Na(+)/H(+) antiporter that extrudes sodium in exchange for external protons. This is Na(+)/H(+) antiporter NhaA from Shigella flexneri.